The chain runs to 940 residues: Antiviral innate immune response receptor RIG-I (940 aa).

2 consecutive CARD domains span residues 1 to 87 (MTAE…GLCE) and 92 to 172 (WDFQ…KTLK). Residues K48, K96, K154, K164, K172, and K190 each participate in a glycyl lysine isopeptide (Lys-Gly) (interchain with G-Cter in ubiquitin) cross-link. The interaction with ZC3HAV1 stretch occupies residues 219–928 (ENQNLSQNSC…LSFDAAEMAG (710 aa)). The 180-residue stretch at 249 to 428 (ALPAQNGKNT…AEATEYICKL (180 aa)) folds into the Helicase ATP-binding domain. Position 262-269 (262-269 (APTGCGKT)) interacts with ATP. A DECH box motif is present at residues 370–373 (DECH). A Helicase C-terminal domain is found at 613-779 (KLRDLCFILQ…ILQTWDEAVF (167 aa)). The tract at residues 738-928 (GSKCFLLTAN…LSFDAAEMAG (191 aa)) is mediates interaction with RNF135. T773 carries the phosphothreonine; by CK2 modification. The 134-residue stretch at 795 to 928 (DNQGKPEPVP…LSFDAAEMAG (134 aa)) folds into the RLR CTR domain. C813 is a binding site for Zn(2+). K815 is covalently cross-linked (Glycyl lysine isopeptide (Lys-Gly) (interchain with G-Cter in ubiquitin)). Position 816 (C816) interacts with Zn(2+). K861 carries the post-translational modification N6-acetyllysine. Residues C867 and C872 each coordinate Zn(2+). Position 912 is an N6-acetyllysine (K912).

It belongs to the helicase family. RLR subfamily. In terms of assembly, monomer; maintained as a monomer in an autoinhibited state. Upon binding of viral RNAs and conformational shift, homooligomerizes and forms filaments on these molecules. Interacts (via tandem CARD domain) with MAVS/IPS1 promoting its filamentation. Interacts with DHX58/LGP2, IKBKE, TBK1 and STING1. Interacts (via CARD domain) with TRIM25 (via SPRY domain). Interacts (double-stranded RNA-bound oligomeric form) with RNF135 (homodimer); involved in RNA length-dependent activation of the RIG-I signaling pathway. Interacts with CYLD. Interacts with NLRC5; blocks the interaction of MAVS/IPS1 to RIGI. Interacts with SRC. Interacts with DDX60. Interacts with ZC3HAV1 (via zinc-fingers) in an RNA-dependent manner. Interacts (via tandem CARD domain) with SEC14L1; the interaction is direct and impairs the interaction of RIGI with MAVS/IPS1. Interacts with VCP/p97; interaction is direct and allows the recruitment of RNF125 and subsequent ubiquitination and degradation. Interacts with NOP53; may regulate RIGI through USP15-mediated 'Lys-63'-linked deubiquitination. Interacts with SIGLEC10, CBL and PTPN11; within a negative feedback loop leading to RIGI degradation. Interacts with LRRC25. Interacts with ZCCHC3; leading to activation of RIGI. Interacts with RNF123. Interacts with UBE2D3 and UBE2N; E2 ubiquitin ligases involved in RNF135-mediated ubiquitination of RIGI and activation of the RIG-I signaling pathway. Interacts with IFIT3. Interacts with DDX3X. Interacts with RTN3. Interacts with ARL16; this interaction is GTP-dependent and induced upon viral infection; this interaction suppresses the RNA sensing activity of RIGI. Interacts with DHX16; this interaction enhances RIGI-mediated antiviral response. Interacts with IRGM; promoting RIGI degradation. Interacts with IFI6; this interaction inhibits RIGI activation. Interacts with ECSIT; this interaction bridges RIGI to the MAVS complex at the mitochondrion. Interacts with YWHAE; this interaction drives RIGI at the mitochondrion. Post-translationally, phosphorylated in resting cells and dephosphorylated in RNA virus-infected cells. Phosphorylation at Thr-773 results in inhibition of its activity while dephosphorylation at these sites results in its activation. In terms of processing, ISGylated. Conjugated to ubiquitin-like protein ISG15 upon IFN-beta stimulation. ISGylation negatively regulates its function in antiviral signaling response. Sumoylated, probably by MUL1; inhibiting its polyubiquitination. Post-translationally, acetylated in response to RNA virus infection. Deacetylated by HDAC6 in the presence of viral mRNAs which is required for detection of viral RNA by RIGI. In terms of processing, ubiquitinated. 'Lys-63' ubiquitination by RNF135, which occurs after RNA-binding and homodimerization, releases the autoinhibition of the CARD domains by the RLR CTR domain, an essential step in the activation of the RIG-I signaling pathway. Also ubiquitinated by TRIM4. Also undergoes 'Lys-48' ubiquitination by RNF125 that leads to proteasomal degradation. 'Lys-48' ubiquitination follows viral infection and is enhanced by 'Lys-63'-linked ubiquitination of the CARD domains that promotes interaction with VCP/p97 and subsequent recruitment of RNF125. Within a negative feedback loop involving SIGLEC10 and PTPN11, 'Lys-48' ubiquitination at Lys-815 by CBL also elicits the proteasomal degradation of RIGI. Deubiquitinated by CYLD, a protease that selectively cleaves 'Lys-63'-linked ubiquitin chains. Also probably deubiquitinated by USP17L2/USP17 that cleaves 'Lys-48'- and 'Lys-63'-linked ubiquitin chains and positively regulates the receptor. Ubiquitinated by TRIM40 via 'Lys-48'-linked ubiquitination; leading to proteasomal degradation. Deubiquitinated by USP27X that cleaves 'Lys-63'-linked ubiquitin chains and inhibits the innate immune receptor activity. Deubiquitinated by USP3 that also cleaves 'Lys-63'-linked ubiquitin chains and inhibits the innate immune receptor activity. Degraded via selective autophagy following interaction with IRGM. IRGM promotes RIGI recruitment to autophagosome membranes, promoting its SQSTM1/p62-dependent autophagic degradation. As to expression, ubiquitously expressed, with highest levels in spleen, liver, intestine and heart. Up-regulated in tracheobronchial lymph node and tonsils during porcine reproductive and respiratory syndrome virus (PRRSV) infection.

Its subcellular location is the cytoplasm. It is found in the cell projection. It localises to the ruffle membrane. The protein resides in the cytoskeleton. The protein localises to the cell junction. Its subcellular location is the tight junction. The enzyme catalyses ATP + H2O = ADP + phosphate + H(+). Innate immune receptor that senses cytoplasmic viral nucleic acids and activates a downstream signaling cascade leading to the production of type I interferons and pro-inflammatory cytokines. Forms a ribonucleoprotein complex with viral RNAs on which it homooligomerizes to form filaments. The homooligomerization allows the recruitment of RNF135 an E3 ubiquitin-protein ligase that activates and amplifies the RIG-I-mediated antiviral signaling in an RNA length-dependent manner through ubiquitination-dependent and -independent mechanisms. Upon activation, associates with mitochondria antiviral signaling protein (MAVS/IPS1) that activates the IKK-related kinases TBK1 and IKBKE which in turn phosphorylate the interferon regulatory factors IRF3 and IRF7, activating transcription of antiviral immunological genes including the IFN-alpha and IFN-beta interferons. Ligands include: 5'-triphosphorylated ssRNA and dsRNA and short dsRNA (&lt;1 kb in length). In addition to the 5'-triphosphate moiety, blunt-end base pairing at the 5'-end of the RNA is very essential. Overhangs at the non-triphosphorylated end of the dsRNA RNA have no major impact on its activity. A 3'overhang at the 5'triphosphate end decreases and any 5'overhang at the 5' triphosphate end abolishes its activity. Detects both positive and negative strand RNA viruses including members of the families Paramyxoviridae, Rhabdoviridae: vesicular stomatitis virus (VSV) Orthomyxoviridae: influenza A and B virus, Flaviviridae: Japanese encephalitis virus (JEV). It also detects rotavirus and reovirus. Also involved in antiviral signaling in response to viruses containing a dsDNA genome. Detects dsRNA produced from non-self dsDNA by RNA polymerase III. May play important roles in granulocyte production and differentiation, bacterial phagocytosis and in the regulation of cell migration. The protein is Antiviral innate immune response receptor RIG-I of Sus scrofa (Pig).